The following is a 196-amino-acid chain: ATP-dependent Clp protease proteolytic subunit (196 aa).

Residue Ser-101 is the Nucleophile of the active site. His-126 is a catalytic residue.

It belongs to the peptidase S14 family. Component of the chloroplastic Clp protease core complex.

The protein localises to the plastid. It localises to the chloroplast stroma. The catalysed reaction is Hydrolysis of proteins to small peptides in the presence of ATP and magnesium. alpha-casein is the usual test substrate. In the absence of ATP, only oligopeptides shorter than five residues are hydrolyzed (such as succinyl-Leu-Tyr-|-NHMec, and Leu-Tyr-Leu-|-Tyr-Trp, in which cleavage of the -Tyr-|-Leu- and -Tyr-|-Trp bonds also occurs).. Functionally, cleaves peptides in various proteins in a process that requires ATP hydrolysis. Has a chymotrypsin-like activity. Plays a major role in the degradation of misfolded proteins. The sequence is that of ATP-dependent Clp protease proteolytic subunit from Pleurastrum terricola (Filamentous green alga).